A 1337-amino-acid polypeptide reads, in one-letter code: DNA mismatch repair protein Msh6 (1337 aa).

The PWWP domain occupies Pro-68 to Ser-130. Residues Ala-170–Val-310 are disordered. Residues Ser-176–Glu-187 are compositionally biased toward acidic residues. Over residues Val-226–Ser-248 the composition is skewed to basic and acidic residues. Acidic residues predominate over residues Asp-257–Glu-272. Basic residues predominate over residues Pro-279–Lys-292. Residues Ser-294–Lys-305 show a composition bias toward basic and acidic residues. Gly-1111–Ser-1118 provides a ligand contact to ATP.

This sequence belongs to the DNA mismatch repair MutS family.

It localises to the nucleus. Its function is as follows. Component of the post-replicative DNA mismatch repair system (MMR). Involved in B cell growth by positively regulating B cell proliferation and controlling replication efficiency. Controls cell cycle to prevent re-replication and defects in DNA damage-induced G2 checkpoint. Doesn't seem to counteract or control the immunoglobulin gene conversion (Ig GC) and to contribute to guanine/uracil mismatch repair. This Gallus gallus (Chicken) protein is DNA mismatch repair protein Msh6.